Here is a 1339-residue protein sequence, read N- to C-terminus: Transcription factor tau subunit sfc3 (1339 aa).

Positions 470–515 are disordered; that stretch reads MESNAEVSPDGMTLLPRKRGRPRKSANISVTSSPIRPSKNENNLPS. Positions 485–497 form a DNA-binding region, a.T hook; it reads PRKRGRPRKSANI. The span at 495–514 shows a compositional bias: polar residues; it reads ANISVTSSPIRPSKNENNLP. Phosphoserine is present on residues Ser-595 and Ser-596. The interval 791 to 826 is disordered; sequence RRKSMPAEIKRHKESSETKPVDKEEVKKNEKEKDDP. A compositionally biased stretch (basic and acidic residues) spans 798 to 826; sequence EIKRHKESSETKPVDKEEVKKNEKEKDDP.

Component of the TFIIIC complex including sfc1, sfc3, sfc4, sfc6 and sfc7. The subunits are organized in two globular domains, tauA and tauB, connected by a proteolysis-sensitive and flexible linker. Interacts with sfc1, sfc4 and sfc6.

It is found in the nucleus envelope. TFIIIC mediates tRNA and 5S RNA gene activation by binding to intragenic promoter elements. Upstream of the transcription start site, TFIIIC assembles the initiation complex TFIIIB-TFIIIC-tDNA, which is sufficient for RNA polymerase III recruitment and function. Part of the tauB domain of TFIIIC that binds boxB DNA promoter sites of tRNA and similar genes. Cooperates with sfc6 in DNA binding. Localizes to chromatin insulator sequence without recruiting RNA polymerase III and plays a role in nuclear organization. This is Transcription factor tau subunit sfc3 from Schizosaccharomyces pombe (strain 972 / ATCC 24843) (Fission yeast).